The following is a 30-amino-acid chain: GIPCGESCVYIPCITTAIGCSCKNKVCYRN.

The cyclopeptide (Gly-Asn) cross-link spans Gly-1–Asn-30. Intrachain disulfides connect Cys-4–Cys-20, Cys-8–Cys-22, and Cys-13–Cys-27.

The protein belongs to the cyclotide family. Bracelet subfamily. In terms of processing, this is a cyclic peptide.

In terms of biological role, probably participates in a plant defense mechanism. This Melicytus dentatus (Tree violet) protein is Cyclotide mden-I.